An 86-amino-acid polypeptide reads, in one-letter code: Cell division topological specificity factor (86 aa).

This sequence belongs to the MinE family.

Prevents the cell division inhibition by proteins MinC and MinD at internal division sites while permitting inhibition at polar sites. This ensures cell division at the proper site by restricting the formation of a division septum at the midpoint of the long axis of the cell. This chain is Cell division topological specificity factor, found in Rhizobium rhizogenes (strain K84 / ATCC BAA-868) (Agrobacterium radiobacter).